Here is a 505-residue protein sequence, read N- to C-terminus: MDLLLLEKTLLGSFVAVLVAILVSKLRGKRFKLPPGPLPVPVFGNWLQVGDDLNHRNLTDLAKKFGDIFLLRMGQRNLVVVSSPDLSKEVLHTQGVEFGSRTRNVVFDIFTGKGQDMVFTVYGEHWRKMRRIMTVPFFTNKVVQQYRYGWEEEAAQVVEDVKKNPEAATNGIVLRRRLQLMMYNNMYRIMFDRRFESEDDPLFNKLKALNGERSRLAQSFDYNYGDFIPILRPFLRGYLKICQEVKERRLQLFKDYFVDERKKLASTKNMSNEGLKCAIDHILDAQKKGEINEDNVLYIVENINVAAIETTLWSIEWGIAELVNHPEIQKKLRHELDTLLGPGHQITEPDTYKLPYLNAVVKETLRLRMAIPLLVPHMNLHDAKLGGFDIPAESKILVNAWWLANNPAHWKNPEEFRPERFLEEGAKVEANGNDFRYLPFGVGRRSCPGIILALPILGITLGRLVQNFELLPPPGQSKIDTSEKGGQFSLHILKHSTIVAKPRSF.

Residues 3–23 (LLLLEKTLLGSFVAVLVAILV) form a helical membrane-spanning segment. Residues 213-218 (RSRLAQ) and Ala-306 contribute to the (E)-cinnamate site. Cys-447 contributes to the heme binding site.

Belongs to the cytochrome P450 family. Heme serves as cofactor.

Its subcellular location is the membrane. The catalysed reaction is (E)-cinnamate + reduced [NADPH--hemoprotein reductase] + O2 = (E)-4-coumarate + oxidized [NADPH--hemoprotein reductase] + H2O + H(+). The protein operates within phenylpropanoid metabolism; trans-4-coumarate biosynthesis; trans-4-coumarate from trans-cinnamate: step 1/1. In terms of biological role, catalyzes the first oxidative step of the phenylpropanoid pathway in higher plants by transforming trans-cinnamate into p-coumarate. The compounds formed by this pathway are essential components for lignification, pollination, and defense against ultraviolet light, predators and pathogens. The chain is Trans-cinnamate 4-monooxygenase (CYP73A16) from Populus kitakamiensis (Aspen).